A 392-amino-acid chain; its full sequence is Chorismate synthase (392 aa).

Residues Arg39 and Arg45 each contribute to the NADP(+) site. Residues 131–133 (RSS), 255–256 (NA), Gly300, 315–319 (KPIPT), and Arg341 each bind FMN.

This sequence belongs to the chorismate synthase family. As to quaternary structure, homotetramer. Requires FMNH2 as cofactor.

It carries out the reaction 5-O-(1-carboxyvinyl)-3-phosphoshikimate = chorismate + phosphate. Its pathway is metabolic intermediate biosynthesis; chorismate biosynthesis; chorismate from D-erythrose 4-phosphate and phosphoenolpyruvate: step 7/7. Functionally, catalyzes the anti-1,4-elimination of the C-3 phosphate and the C-6 proR hydrogen from 5-enolpyruvylshikimate-3-phosphate (EPSP) to yield chorismate, which is the branch point compound that serves as the starting substrate for the three terminal pathways of aromatic amino acid biosynthesis. This reaction introduces a second double bond into the aromatic ring system. In Leuconostoc mesenteroides subsp. mesenteroides (strain ATCC 8293 / DSM 20343 / BCRC 11652 / CCM 1803 / JCM 6124 / NCDO 523 / NBRC 100496 / NCIMB 8023 / NCTC 12954 / NRRL B-1118 / 37Y), this protein is Chorismate synthase.